The primary structure comprises 117 residues: Immunoglobulin heavy variable 1-45 (117 aa).

Residues 1 to 19 (MDWTWRILFLVAAVTDAYS) form the signal peptide. Residues 20 to 44 (QMQLVQSGAEVKKTGSSVKVSCKAS) are framework-1. Positions 20 to 117 (QMQLVQSGAE…EDTAMYYCAR (98 aa)) constitute an Ig-like domain. Cysteine 41 and cysteine 115 are disulfide-bonded. The segment at 45–52 (GYTFTYRY) is complementarity-determining-1. The framework-2 stretch occupies residues 53-69 (LHWVRQAPGQALEWMGW). The segment at 70–77 (ITPFNGNT) is complementarity-determining-2. The tract at residues 78–115 (NYAQKFQDRVTITRDRSMSTAYMELSSLRSEDTAMYYC) is framework-3. The tract at residues 116-117 (AR) is complementarity-determining-3.

As to quaternary structure, immunoglobulins are composed of two identical heavy chains and two identical light chains; disulfide-linked.

The protein resides in the secreted. Its subcellular location is the cell membrane. V region of the variable domain of immunoglobulin heavy chains that participates in the antigen recognition. Immunoglobulins, also known as antibodies, are membrane-bound or secreted glycoproteins produced by B lymphocytes. In the recognition phase of humoral immunity, the membrane-bound immunoglobulins serve as receptors which, upon binding of a specific antigen, trigger the clonal expansion and differentiation of B lymphocytes into immunoglobulins-secreting plasma cells. Secreted immunoglobulins mediate the effector phase of humoral immunity, which results in the elimination of bound antigens. The antigen binding site is formed by the variable domain of one heavy chain, together with that of its associated light chain. Thus, each immunoglobulin has two antigen binding sites with remarkable affinity for a particular antigen. The variable domains are assembled by a process called V-(D)-J rearrangement and can then be subjected to somatic hypermutations which, after exposure to antigen and selection, allow affinity maturation for a particular antigen. The polypeptide is Immunoglobulin heavy variable 1-45 (Homo sapiens (Human)).